We begin with the raw amino-acid sequence, 125 residues long: Large ribosomal subunit protein bL12 (125 aa).

It belongs to the bacterial ribosomal protein bL12 family. Homodimer. Part of the ribosomal stalk of the 50S ribosomal subunit. Forms a multimeric L10(L12)X complex, where L10 forms an elongated spine to which 2 to 4 L12 dimers bind in a sequential fashion. Binds GTP-bound translation factors.

Forms part of the ribosomal stalk which helps the ribosome interact with GTP-bound translation factors. Is thus essential for accurate translation. The protein is Large ribosomal subunit protein bL12 of Helicobacter pylori (strain ATCC 700392 / 26695) (Campylobacter pylori).